The chain runs to 433 residues: Probable mannose-6-phosphate isomerase (433 aa).

Residues glutamine 103, histidine 105, glutamate 130, and histidine 277 each coordinate Zn(2+). Residue arginine 296 is part of the active site.

Belongs to the mannose-6-phosphate isomerase type 1 family. Zn(2+) is required as a cofactor.

It localises to the cytoplasm. The catalysed reaction is D-mannose 6-phosphate = D-fructose 6-phosphate. It functions in the pathway nucleotide-sugar biosynthesis; GDP-alpha-D-mannose biosynthesis; alpha-D-mannose 1-phosphate from D-fructose 6-phosphate: step 1/2. In terms of biological role, involved in the synthesis of the GDP-mannose and dolichol-phosphate-mannose required for a number of critical mannosyl transfer reactions. This Echinococcus multilocularis (Fox tapeworm) protein is Probable mannose-6-phosphate isomerase (PMIH).